A 92-amino-acid polypeptide reads, in one-letter code: Sugar fermentation stimulation protein B (92 aa).

The segment at residues 50 to 69 (EMIIAKALGTDPWVIWPSRY) is a DNA-binding region (H-T-H motif).

The protein belongs to the ner transcriptional regulatory family.

This protein is involved in positive regulation of the metabolism of sugars. This Escherichia coli O157:H7 protein is Sugar fermentation stimulation protein B (sfsB).